Reading from the N-terminus, the 553-residue chain is Dihydroxy-acid dehydratase (553 aa).

Asp-78 contributes to the Mg(2+) binding site. Cys-119 contacts [2Fe-2S] cluster. Asp-120 and Lys-121 together coordinate Mg(2+). At Lys-121 the chain carries N6-carboxylysine. Cys-192 lines the [2Fe-2S] cluster pocket. A Mg(2+)-binding site is contributed by Glu-442. Ser-468 (proton acceptor) is an active-site residue.

This sequence belongs to the IlvD/Edd family. As to quaternary structure, homodimer. It depends on [2Fe-2S] cluster as a cofactor. Requires Mg(2+) as cofactor.

It catalyses the reaction (2R)-2,3-dihydroxy-3-methylbutanoate = 3-methyl-2-oxobutanoate + H2O. The catalysed reaction is (2R,3R)-2,3-dihydroxy-3-methylpentanoate = (S)-3-methyl-2-oxopentanoate + H2O. Its pathway is amino-acid biosynthesis; L-isoleucine biosynthesis; L-isoleucine from 2-oxobutanoate: step 3/4. It functions in the pathway amino-acid biosynthesis; L-valine biosynthesis; L-valine from pyruvate: step 3/4. Its function is as follows. Functions in the biosynthesis of branched-chain amino acids. Catalyzes the dehydration of (2R,3R)-2,3-dihydroxy-3-methylpentanoate (2,3-dihydroxy-3-methylvalerate) into 2-oxo-3-methylpentanoate (2-oxo-3-methylvalerate) and of (2R)-2,3-dihydroxy-3-methylbutanoate (2,3-dihydroxyisovalerate) into 2-oxo-3-methylbutanoate (2-oxoisovalerate), the penultimate precursor to L-isoleucine and L-valine, respectively. The chain is Dihydroxy-acid dehydratase from Campylobacter hominis (strain ATCC BAA-381 / DSM 21671 / CCUG 45161 / LMG 19568 / NCTC 13146 / CH001A).